Here is a 481-residue protein sequence, read N- to C-terminus: MVGVTSEPRTLAEKVWAAHVVRSAEGEPDLLFIDLHLLHEVTSPQAFDGLRLAGRRVRRPDLTIATEDHNTPTGYADPSFRSRRGDLLTITDPTSRTQIETLRRNCAEFGVRLHPLGDKNQGIVHVIGPQLGLTQPGMTIVCGDSHTATHGAFGALAFGIGTSEVEHVLATQTLPQARPRTMAVNVVGDLAPGVTAKDLVLALIAQVGTGGGRGHVVEYRGEAIRKLSMEGRMTIANMSIEWGAKAGMIAPDETTFDYLRGRPNAPAGTDWEAAVAYWRTLTTDADATFDAEVTLDASRITPFVTWGTNPGQGAPLDASVPHPDELATEPERAAARRALEYMDLAPGTALRDLAVDVVFVGSCTNGRIEDLRAAADVLRGHRVAQGVRMLVVPGSAVVRESAEAEGLDKIFTEAGAEWRFAGCSMCLGMNPDTLLPGQRAASTSNRNFEGRQGRGGRTHLVSPPVAAATAVTGRLASPADL.

[4Fe-4S] cluster is bound by residues C363, C423, and C426. Residues 437–463 (GQRAASTSNRNFEGRQGRGGRTHLVSP) are disordered.

The protein belongs to the aconitase/IPM isomerase family. LeuC type 1 subfamily. In terms of assembly, heterodimer of LeuC and LeuD. The cofactor is [4Fe-4S] cluster.

It carries out the reaction (2R,3S)-3-isopropylmalate = (2S)-2-isopropylmalate. It functions in the pathway amino-acid biosynthesis; L-leucine biosynthesis; L-leucine from 3-methyl-2-oxobutanoate: step 2/4. Functionally, catalyzes the isomerization between 2-isopropylmalate and 3-isopropylmalate, via the formation of 2-isopropylmaleate. The sequence is that of 3-isopropylmalate dehydratase large subunit from Salinispora arenicola (strain CNS-205).